The primary structure comprises 484 residues: Nuclear rim protein 1 (484 aa).

Ser3 carries the post-translational modification Phosphoserine. Transmembrane regions (helical) follow at residues 145-165 and 252-272; these read FTIF…MFGY and TAIV…AIVF. The disordered stretch occupies residues 416–458; that stretch reads SSNENLEKGGAFLPNQDQNRPSKSLSPLRKTPLSARQKRFEGS. Ser417 carries the post-translational modification Phosphoserine. Over residues 430–440 the composition is skewed to polar residues; the sequence is NQDQNRPSKSL. Ser474 is modified (phosphoserine).

Belongs to the NUR1 family. In terms of assembly, interacts with CSM1.

It is found in the nucleus membrane. Functionally, member of a perinuclear network that controls recombination at multiple loci to maintain genome stability. Required for rDNA repeat stability. The chain is Nuclear rim protein 1 (NUR1) from Saccharomyces cerevisiae (strain YJM789) (Baker's yeast).